The sequence spans 351 residues: Uroporphyrinogen decarboxylase (351 aa).

Residues 25–29, aspartate 74, tyrosine 151, serine 206, and histidine 325 contribute to the substrate site; that span reads RQAGR.

This sequence belongs to the uroporphyrinogen decarboxylase family. In terms of assembly, homodimer.

It localises to the cytoplasm. It carries out the reaction uroporphyrinogen III + 4 H(+) = coproporphyrinogen III + 4 CO2. The protein operates within porphyrin-containing compound metabolism; protoporphyrin-IX biosynthesis; coproporphyrinogen-III from 5-aminolevulinate: step 4/4. Functionally, catalyzes the decarboxylation of four acetate groups of uroporphyrinogen-III to yield coproporphyrinogen-III. In Chlorobaculum parvum (strain DSM 263 / NCIMB 8327) (Chlorobium vibrioforme subsp. thiosulfatophilum), this protein is Uroporphyrinogen decarboxylase.